A 389-amino-acid polypeptide reads, in one-letter code: Gastricsin (389 aa).

The N-terminal stretch at 1 to 16 is a signal peptide; it reads MKWMVVALVCLQLLEA. A propeptide spans 17–59 (activation peptide); sequence KVTKVTLKKFKSIRENLREQGLLEDFLKTNHYDPAQKYHFGDF. Positions 73-386 constitute a Peptidase A1 domain; the sequence is YFGEISIGTP…DMGNNRVGFA (314 aa). Aspartate 91 is a catalytic residue. 2 cysteine pairs are disulfide-bonded: cysteine 104–cysteine 109 and cysteine 268–cysteine 272. The active site involves aspartate 277. The cysteines at positions 311 and 344 are disulfide-linked.

Belongs to the peptidase A1 family.

Its subcellular location is the secreted. It carries out the reaction More restricted specificity than pepsin A, but shows preferential cleavage at Tyr-|-Xaa bonds. High activity on hemoglobin.. Its function is as follows. Hydrolyzes a variety of proteins. The protein is Gastricsin (PGC) of Suncus murinus (Asian house shrew).